Reading from the N-terminus, the 353-residue chain is Guanine nucleotide-binding protein G(q) subunit alpha (353 aa).

S-palmitoyl cysteine attachment occurs at residues cysteine 3 and cysteine 4. One can recognise a G-alpha domain in the interval 32 to 353 (RELKLLLLGT…QLNLKEYNLV (322 aa)). The segment at 35–48 (KLLLLGTGESGKST) is G1 motif. GTP is bound by residues 40–47 (GTGESGKS), 174–180 (LRVRVPT), 199–203 (DVGGQ), 268–271 (NKKD), and alanine 325. Residues serine 47 and threonine 180 each coordinate Mg(2+). A G2 motif region spans residues 172–180 (DILRVRVPT). The tract at residues 195 to 204 (FRMVDVGGQR) is G3 motif. Positions 264–271 (ILFLNKKD) are G4 motif. Residues 323 to 328 (TCATDT) are G5 motif.

It belongs to the G-alpha family. G(q) subfamily. As to quaternary structure, g proteins are composed of 3 units; alpha, beta and gamma. The alpha chain contains the guanine nucleotide binding site.

Guanine nucleotide-binding proteins (G proteins) are involved as modulators or transducers in various transmembrane signaling systems. In Lymnaea stagnalis (Great pond snail), this protein is Guanine nucleotide-binding protein G(q) subunit alpha.